Consider the following 265-residue polypeptide: Very long chain fatty acid elongase 6 (265 aa).

The N-linked (GlcNAc...) asparagine glycan is linked to Asn-2. 7 helical membrane passes run 34–51, 70–90, 111–131, 136–156, 159–179, 197–217, and 232–252; these read FLFSALYAAFIFGGRHLM, LAVFSIFGALRTGAYMVYILM, FWAYAFVLSKAPELGDTIFII, KLIFLHWYHHITVLLYSWYSY, MVAGGGWFMTMNYGVHAVMYS, FITLSQITQMLMGCVVNYLVF, and IFWSSLMYLSYLVLFCHFFFE.

Belongs to the ELO family. ELOVL6 subfamily. In terms of processing, N-Glycosylated. In terms of tissue distribution, ubiquitous.

Its subcellular location is the endoplasmic reticulum membrane. The enzyme catalyses a very-long-chain acyl-CoA + malonyl-CoA + H(+) = a very-long-chain 3-oxoacyl-CoA + CO2 + CoA. It catalyses the reaction hexadecanoyl-CoA + malonyl-CoA + H(+) = 3-oxooctadecanoyl-CoA + CO2 + CoA. It carries out the reaction (9Z)-hexadecenoyl-CoA + malonyl-CoA + H(+) = 3-oxo-(11Z)-octadecenoyl-CoA + CO2 + CoA. The catalysed reaction is dodecanoyl-CoA + malonyl-CoA + H(+) = 3-oxotetradecanoyl-CoA + CO2 + CoA. The enzyme catalyses tetradecanoyl-CoA + malonyl-CoA + H(+) = 3-oxohexadecanoyl-CoA + CO2 + CoA. It catalyses the reaction (9Z)-octadecenoyl-CoA + malonyl-CoA + H(+) = 3-oxo-(11Z)-eicosenoyl-CoA + CO2 + CoA. It carries out the reaction (9Z,12Z)-octadecadienoyl-CoA + malonyl-CoA + H(+) = (11Z,14Z)-3-oxoicosa-11,14-dienoyl-CoA + CO2 + CoA. The catalysed reaction is (9Z,12Z,15Z)-octadecatrienoyl-CoA + malonyl-CoA + H(+) = (11Z,14Z,17Z)-3-oxoeicosatrienoyl-CoA + CO2 + CoA. Its pathway is lipid metabolism; fatty acid biosynthesis. The reaction is stimulated by the presence of HSD17B12, the enzyme catalyzing the second step of the elongation cycle. Functionally, catalyzes the first and rate-limiting reaction of the four reactions that constitute the long-chain fatty acids elongation cycle. This endoplasmic reticulum-bound enzymatic process allows the addition of 2 carbons to the chain of long- and very long-chain fatty acids (VLCFAs) per cycle. Condensing enzyme that elongates fatty acids with 12, 14 and 16 carbons with higher activity toward C16:0 acyl-CoAs. Catalyzes the synthesis of unsaturated C16 long chain fatty acids and, to a lesser extent, C18:0 and those with low desaturation degree. May participate in the production of saturated and monounsaturated VLCFAs of different chain lengths that are involved in multiple biological processes as precursors of membrane lipids and lipid mediators. In Homo sapiens (Human), this protein is Very long chain fatty acid elongase 6.